The following is a 271-amino-acid chain: Formamidopyrimidine-DNA glycosylase (271 aa).

The active-site Schiff-base intermediate with DNA is the proline 2. The active-site Proton donor is glutamate 3. Lysine 56 acts as the Proton donor; for beta-elimination activity in catalysis. The DNA site is built by histidine 89, arginine 107, and lysine 151. Residues 236 to 270 (NVYGRAGLPCRQCGTPVRLLRQGQRSTYFCPHCQR) form an FPG-type zinc finger. The Proton donor; for delta-elimination activity role is filled by arginine 260.

The protein belongs to the FPG family. As to quaternary structure, monomer. Zn(2+) serves as cofactor.

The enzyme catalyses Hydrolysis of DNA containing ring-opened 7-methylguanine residues, releasing 2,6-diamino-4-hydroxy-5-(N-methyl)formamidopyrimidine.. The catalysed reaction is 2'-deoxyribonucleotide-(2'-deoxyribose 5'-phosphate)-2'-deoxyribonucleotide-DNA = a 3'-end 2'-deoxyribonucleotide-(2,3-dehydro-2,3-deoxyribose 5'-phosphate)-DNA + a 5'-end 5'-phospho-2'-deoxyribonucleoside-DNA + H(+). In terms of biological role, involved in base excision repair of DNA damaged by oxidation or by mutagenic agents. Acts as a DNA glycosylase that recognizes and removes damaged bases. Has a preference for oxidized purines, such as 7,8-dihydro-8-oxoguanine (8-oxoG). Has AP (apurinic/apyrimidinic) lyase activity and introduces nicks in the DNA strand. Cleaves the DNA backbone by beta-delta elimination to generate a single-strand break at the site of the removed base with both 3'- and 5'-phosphates. This is Formamidopyrimidine-DNA glycosylase from Acidovorax sp. (strain JS42).